The following is a 215-amino-acid chain: Adenylate kinase (215 aa).

10–15 contacts ATP; sequence GAGKGT. Residues 30-59 form an NMP region; sequence STGDMLRAAIKAQTPMGKMAKEFMDAGKLV. Residues T31, R36, 57–59, 85–88, and Q92 contribute to the AMP site; these read KLV and GFPR. Residues 122 to 159 form an LID region; sequence GRRVHPASGRTYHITYNPPKVDDKDNETGDDLIQREDD. Residues R123 and 132-133 contribute to the ATP site; that span reads TY. AMP-binding residues include R156 and R167. ATP is bound at residue Q201.

Belongs to the adenylate kinase family. In terms of assembly, monomer.

It is found in the cytoplasm. It catalyses the reaction AMP + ATP = 2 ADP. The protein operates within purine metabolism; AMP biosynthesis via salvage pathway; AMP from ADP: step 1/1. In terms of biological role, catalyzes the reversible transfer of the terminal phosphate group between ATP and AMP. Plays an important role in cellular energy homeostasis and in adenine nucleotide metabolism. This Hydrogenovibrio crunogenus (strain DSM 25203 / XCL-2) (Thiomicrospira crunogena) protein is Adenylate kinase.